We begin with the raw amino-acid sequence, 155 residues long: Large ribosomal subunit protein eL24 (155 aa).

A compositionally biased stretch (basic and acidic residues) spans 97 to 129; that stretch reads KPEIRKAKRDEKAKADKEKKKADKAARKADKAK. The interval 97 to 155 is disordered; sequence KPEIRKAKRDEKAKADKEKKKADKAARKADKAKSAATQASKISKQQAKGAFQKVAATSR. The segment covering 133–142 has biased composition (polar residues); sequence TQASKISKQQ.

The protein belongs to the eukaryotic ribosomal protein eL24 family.

The chain is Large ribosomal subunit protein eL24 (RPL24) from Eremothecium gossypii (strain ATCC 10895 / CBS 109.51 / FGSC 9923 / NRRL Y-1056) (Yeast).